Consider the following 206-residue polypeptide: Small ribosomal subunit protein uS4A (206 aa).

The S4 RNA-binding domain maps to 98 to 163; it reads MRLDNVVYRL…SERFKMFAEN (66 aa).

Belongs to the universal ribosomal protein uS4 family. As to quaternary structure, part of the 30S ribosomal subunit. Contacts protein S5. The interaction surface between S4 and S5 is involved in control of translational fidelity.

One of the primary rRNA binding proteins, it binds directly to 16S rRNA where it nucleates assembly of the body of the 30S subunit. In terms of biological role, with S5 and S12 plays an important role in translational accuracy. The protein is Small ribosomal subunit protein uS4A of Clostridium perfringens (strain SM101 / Type A).